A 419-amino-acid chain; its full sequence is tRNA(Met) cytidine acetate ligase (419 aa).

ATP contacts are provided by residues 7–20, Gly101, Asn163, and Arg188; that span reads ITEYNPFHNGHLHH.

Belongs to the TmcAL family.

Its subcellular location is the cytoplasm. The catalysed reaction is cytidine(34) in elongator tRNA(Met) + acetate + ATP = N(4)-acetylcytidine(34) in elongator tRNA(Met) + AMP + diphosphate. Its function is as follows. Catalyzes the formation of N(4)-acetylcytidine (ac(4)C) at the wobble position of elongator tRNA(Met), using acetate and ATP as substrates. First activates an acetate ion to form acetyladenylate (Ac-AMP) and then transfers the acetyl group to tRNA to form ac(4)C34. The chain is tRNA(Met) cytidine acetate ligase from Syntrophotalea carbinolica (strain DSM 2380 / NBRC 103641 / GraBd1) (Pelobacter carbinolicus).